The sequence spans 199 residues: Superoxide dismutase [Fe] (199 aa).

Fe cation contacts are provided by H27, H79, D161, and H165.

This sequence belongs to the iron/manganese superoxide dismutase family. Homodimer. The cofactor is Fe cation.

It catalyses the reaction 2 superoxide + 2 H(+) = H2O2 + O2. Its function is as follows. Destroys superoxide anion radicals which are normally produced within the cells and which are toxic to biological systems. In Synechocystis sp. (strain ATCC 27184 / PCC 6803 / Kazusa), this protein is Superoxide dismutase [Fe] (sodB).